Consider the following 63-residue polypeptide: uncharacterized protein (63 aa).

Positions 1 to 17 are enriched in basic and acidic residues; sequence MRYTDSRKLTPETDANH. A disordered region spans residues 1 to 32; the sequence is MRYTDSRKLTPETDANHKTASPQPIRRISSQT. Residues 18 to 32 show a composition bias toward polar residues; sequence KTASPQPIRRISSQT.

The protein to Y.enterocolitica HemP.

This is an uncharacterized protein from Escherichia coli (strain K12).